Here is a 73-residue protein sequence, read N- to C-terminus: Translation initiation factor IF-1 (73 aa).

The S1-like domain maps to 1–73 (MPKKEGVIEI…TRGRIVYRYK (73 aa)).

This sequence belongs to the IF-1 family. As to quaternary structure, component of the 30S ribosomal translation pre-initiation complex which assembles on the 30S ribosome in the order IF-2 and IF-3, IF-1 and N-formylmethionyl-tRNA(fMet); mRNA recruitment can occur at any time during PIC assembly.

The protein localises to the cytoplasm. Its function is as follows. One of the essential components for the initiation of protein synthesis. Stabilizes the binding of IF-2 and IF-3 on the 30S subunit to which N-formylmethionyl-tRNA(fMet) subsequently binds. Helps modulate mRNA selection, yielding the 30S pre-initiation complex (PIC). Upon addition of the 50S ribosomal subunit IF-1, IF-2 and IF-3 are released leaving the mature 70S translation initiation complex. The polypeptide is Translation initiation factor IF-1 (Nocardioides sp. (strain ATCC BAA-499 / JS614)).